Consider the following 242-residue polypeptide: Large ribosomal subunit protein uL1 (242 aa).

Belongs to the universal ribosomal protein uL1 family. As to quaternary structure, part of the 50S ribosomal subunit.

In terms of biological role, binds directly to 23S rRNA. The L1 stalk is quite mobile in the ribosome, and is involved in E site tRNA release. Protein L1 is also a translational repressor protein, it controls the translation of the L11 operon by binding to its mRNA. The polypeptide is Large ribosomal subunit protein uL1 (Dictyoglomus turgidum (strain DSM 6724 / Z-1310)).